Here is a 729-residue protein sequence, read N- to C-terminus: MSGAVLVAIAAAVGNLLQGWDNATIAGAVLYIKKEFNLESNPSVEGLIVAMSLIGATLITTCSGGVADWLGRRPMLILSSILYFVGSLVMLWSPNVYVLLLGRLLDGFGVGLVVTLVPIYISETAPPEIRGLLNTLPQFTGSGGMFLSYCMVFGMSLMPSPSWRLMLGVLFIPSLVFFFLTVFFLPESPRWLVSKGRMLEAKRVLQRLRGREDVSGEMALLVEGLGIGGETTIEEYIIGPADEVTDDHDIAVDKDQIKLYGAEEGLSWVARPVKGGSTMSVLSRHGSTMSRRQGSLIDPLVTLFGSVHEKMPDTGSMRSALFPHFGSMFSVGGNQPRHEDWDEENLVGEGEDYPSDHGDDSEDDLHSPLISRQTTSMEKDMPHTAHGTLSTFRHGSQVQGAQGEGAGSMGIGGGWQVAWKWTEREDESGQKEEGFPGSRRGSIVSLPGGDGTGEADFVQASALVSQPALYSKDLLKEHTIGPAMVHPSETTKGSIWHDLHDPGVKRALVVGVGLQILQQFSGINGVLYYTPQILEQAGVGILLSNMGISSSSASLLISALTTFVMLPAIAVAMRLMDLSGRRTLLLTTIPILIASLLVLVISNLVHMNSIVHAVLSTVSVVLYFCFFVMGFGPAPNILCSEIFPTRVRGICIAICALTFWICDIIVTYSLPVLLKSIGLAGVFGMYAIVCCISWVFVFIKVPETKGMPLEVITEFFSVGARQAEAAKNE.

The next 6 helical transmembrane spans lie at 1–21 (MSGAVLVAIAAAVGNLLQGWD), 47–67 (LIVAMSLIGATLITTCSGGVA), 81–101 (ILYFVGSLVMLWSPNVYVLLL), 104–124 (LLDGFGVGLVVTLVPIYISET), 139–159 (FTGSGGMFLSYCMVFGMSLMP), and 165–185 (LMLGVLFIPSLVFFFLTVFFL). A compositionally biased stretch (acidic residues) spans 347 to 363 (VGEGEDYPSDHGDDSED). Disordered regions lie at residues 347-367 (VGEGEDYPSDHGDDSEDDLHS) and 423-442 (EREDESGQKEEGFPGSRRGS). Basic and acidic residues predominate over residues 423-434 (EREDESGQKEEG). A phosphoserine mark is found at Ser-438 and Gly-448. Transmembrane regions (helical) follow at residues 507–527 (ALVVGVGLQILQQFSGINGVL), 553–573 (ASLLISALTTFVMLPAIAVAM), 585–605 (LLTTIPILIASLLVLVISNLV), 610–630 (IVHAVLSTVSVVLYFCFFVMG), 650–670 (ICIAICALTFWICDIIVTYSL), and 679–699 (LAGVFGMYAIVCCISWVFVFI).

Belongs to the major facilitator superfamily. Sugar transporter (TC 2.A.1.1) family. Mostly expressed in roots and stems, and, to a lower extent, in juvenile and adult leaves, and in flower tissues.

The protein resides in the vacuole membrane. It carries out the reaction D-glucose(out) + H(+)(in) = D-glucose(in) + H(+)(out). The enzyme catalyses sucrose(out) + H(+)(in) = sucrose(in) + H(+)(out). Sugar proton-coupled antiporter which contributes to vacuolar sugar import (e.g. monosaccharides including glucose, sucrose and fructose), particularly during stress responses (e.g. in response to cold). The polypeptide is Monosaccharide-sensing protein 2 (Arabidopsis thaliana (Mouse-ear cress)).